Reading from the N-terminus, the 608-residue chain is MEMRWFLSKIQDDFRGGKINLEKTQRLLEKLDIRCSYIHVKQIFKDNDRLKQGRITIEEFRAIYRIITHREEIIEIFNTYSENRKILLASNLAQFLTQEQYAAEMSKAIAFEIIQKYEPIEEVRKAHQMSLEGFTRYMDSRECLLFKNECRKVYQDMTHPLNDYFISSSHNTYLVSDQLLGPSDLWGYVSALVKGCRCLEIDCWDGAQNEPVVYHGYTLTSKLLFKTVIQAIHKYAFMTSDYPVVLSLENHCSTAQQEVMADNLQATFGESLLSDMLDDFPDTLPSPEALKFKILVKNKKIGTLKETHERKGSDKRGDNQDKETGVKKLPGVMLFKKKKTRKLKIALALSDLVIYTKAEKFKSFQHSRLYQQFNENNSIGETQARKLSKLRVHEFIFHTRKFITRIYPKATRADSSNFNPQEFWNIGCQMVALNFQTPGLPMDLQNGKFLDNGGSGYILKPHFLRESKSYFNPSNIKEGMPITLTIRLISGIQLPLTHSSSNKGDSLVIIEVFGVPNDQMKQQTRVIKKNAFSPRWNETFTFIIHVPELALIRFVVEGQGLIAGNEFLGQYTLPLLCMNKGYRRIPLFSRMGESLEPASLFVYVWYVR.

Residues 35-70 form the EF-hand domain; the sequence is CSYIHVKQIFKDNDRLKQGRITIEEFRAIYRIITHR. A PI-PLC X-box domain is found at 155–299; that stretch reads QDMTHPLNDY…LKFKILVKNK (145 aa). Active-site residues include H170 and H215. Residues 305–324 are disordered; it reads KETHERKGSDKRGDNQDKET. Residues 349–465 form the PI-PLC Y-box domain; the sequence is LSDLVIYTKA…GYILKPHFLR (117 aa). Residues 465–589 enclose the C2 domain; the sequence is RESKSYFNPS…KGYRRIPLFS (125 aa).

In terms of assembly, interacts via its C2 domain with PtdIns(3)P and, to a lesser extent, PtdIns(5)P in vitro. It depends on Ca(2+) as a cofactor. Expressed specifically in testis and sperm. Weakly expressed in pancreatic-duct cells. Up-regulated in pancreatic-duct cells from patients with cystic fibrosis.

It is found in the nucleus. It localises to the cytoplasm. The protein localises to the perinuclear region. It catalyses the reaction a 1,2-diacyl-sn-glycero-3-phospho-(1D-myo-inositol-4,5-bisphosphate) + H2O = 1D-myo-inositol 1,4,5-trisphosphate + a 1,2-diacyl-sn-glycerol + H(+). In terms of biological role, the production of the second messenger molecules diacylglycerol (DAG) and inositol 1,4,5-trisphosphate (IP3) is mediated by activated phosphatidylinositol-specific phospholipase C enzymes. In vitro, hydrolyzes PtdIns(4,5)P2 in a Ca(2+)-dependent manner. Triggers intracellular Ca(2+) oscillations in oocytes solely during M phase and is involved in inducing oocyte activation and initiating embryonic development up to the blastocyst stage. Is therefore a strong candidate for the egg-activating soluble sperm factor that is transferred from the sperm into the egg cytoplasm following gamete membrane fusion. May exert an inhibitory effect on phospholipase-C-coupled processes that depend on calcium ions and protein kinase C, including CFTR trafficking and function. The polypeptide is 1-phosphatidylinositol 4,5-bisphosphate phosphodiesterase zeta-1 (Homo sapiens (Human)).